A 456-amino-acid polypeptide reads, in one-letter code: NADPH-ferredoxin reductase FprA (456 aa).

FAD contacts are provided by S14, E40, L48, and V84. NADP(+) contacts are provided by residues R110, 155–158 (NGNV), 199–200 (RR), and E211. FAD contacts are provided by residues W359 and 366-368 (GVI). G366 contacts NADP(+).

The protein belongs to the ferredoxin--NADP reductase type 1 family. As to quaternary structure, monomer. FAD serves as cofactor.

It carries out the reaction 2 reduced [2Fe-2S]-[ferredoxin] + NADP(+) + H(+) = 2 oxidized [2Fe-2S]-[ferredoxin] + NADPH. Functionally, may serve as electron transfer protein and supply electrons to P450 systems. This Mycobacterium tuberculosis (strain CDC 1551 / Oshkosh) protein is NADPH-ferredoxin reductase FprA (fprA).